The primary structure comprises 101 residues: Small ribosomal subunit protein uS14 (101 aa).

It belongs to the universal ribosomal protein uS14 family. In terms of assembly, part of the 30S ribosomal subunit. Contacts proteins S3 and S10.

Binds 16S rRNA, required for the assembly of 30S particles and may also be responsible for determining the conformation of the 16S rRNA at the A site. The sequence is that of Small ribosomal subunit protein uS14 from Ectopseudomonas mendocina (strain ymp) (Pseudomonas mendocina).